A 170-amino-acid chain; its full sequence is Transcription factor E (170 aa).

An HTH TFE/IIEalpha-type domain is found at 1 to 93 (MKDVYLYIVE…TWYVNDEVIS (93 aa)).

It belongs to the TFE family. As to quaternary structure, monomer. Interaction with RNA polymerase subunits RpoF and RpoE is necessary for Tfe stimulatory transcription activity. Able to interact with Tbp and RNA polymerase in the absence of DNA promoter. Interacts both with the preinitiation and elongation complexes.

In terms of biological role, transcription factor that plays a role in the activation of archaeal genes transcribed by RNA polymerase. Facilitates transcription initiation by enhancing TATA-box recognition by TATA-box-binding protein (Tbp), and transcription factor B (Tfb) and RNA polymerase recruitment. Not absolutely required for transcription in vitro, but particularly important in cases where Tbp or Tfb function is not optimal. It dynamically alters the nucleic acid-binding properties of RNA polymerases by stabilizing the initiation complex and destabilizing elongation complexes. Seems to translocate with the RNA polymerase following initiation and acts by binding to the non template strand of the transcription bubble in elongation complexes. The polypeptide is Transcription factor E (Pyrobaculum calidifontis (strain DSM 21063 / JCM 11548 / VA1)).